A 353-amino-acid polypeptide reads, in one-letter code: Trans-enoyl reductase RAP2 (353 aa).

NADP(+) is bound at residue 46–49 (CDHK). 131 to 138 (TGLSTIGM) contacts substrate. Residues 189 to 192 (SPRN), Y207, and 254 to 255 (LE) each bind NADP(+). 274-278 (GMALL) is a binding site for substrate. 343–344 (VS) contributes to the NADP(+) binding site.

The protein belongs to the zinc-containing alcohol dehydrogenase family. In terms of assembly, monomer.

It participates in secondary metabolite biosynthesis. Functionally, trans-enoyl reductase; part of the gene cluster that mediates the biosynthesis of a tyrosine-derived cytochalasan acting as a fungal signal recognized by resistant rice plants and leads to avirulence in Pi33 resistant rice cultivars. The first step in the pathway is catalyzed by the hybrid PKS-NRPS ACE1, assisted by the enoyl reductase RAP1, that are responsible for fusion of the tyrosine precursor and the polyketide backbone. The polyketide synthase module (PKS) of ACE1 is responsible for the synthesis of the polyketide backbone and the downstream nonribosomal peptide synthetase (NRPS) amidates the carboxyl end of the polyketide with the tyrosine precursor. Because ACE1 lacks a designated enoylreductase (ER) domain, the required activity is provided the enoyl reductase RAP1. Reduction by the hydrolyase ORFZ, followed by dehydration and intra-molecular Diels-Alder cyclization by the Diels-Alderase ORF3 then yield the required isoindolone-fused macrocycle. A number of oxidative steps catalyzed by the tailoring enzymes identified within the cluster, including cytochrome P450 monooxygenases CYP1 to CYP4, the FAD-linked oxidoreductase OXR2 and the short-chain dehydrogenase/reductase OXR1, are further required to afford the final cytochalasans that confer avirulence and which have still to be identified. The monooxygenase CYP1 has been shown to be a site-selective C-18 hydroxylase whereas the function of CYP3 is the site-selective epoxidation of the C-6/C-7 olefin that is present in some intermediate compounds. Finally, SYN2 and RAP2 are not required for avirulence in Pi33 resistant rice cultivars. This Pyricularia oryzae (strain 70-15 / ATCC MYA-4617 / FGSC 8958) (Rice blast fungus) protein is Trans-enoyl reductase RAP2.